Consider the following 233-residue polypeptide: Defense protein 3 (233 aa).

Positions 1-17 (MFGKFVLLAVLLVGVNS) are cleaved as a signal peptide. A propeptide spanning residues 18 to 45 (RYVIIEDPVYYIEDHELPEQWTSSRVRR) is cleaved from the precursor.

This sequence belongs to the attacin/sarcotoxin-2 family.

It localises to the secreted. In terms of biological role, has antibacterial activity against both Gram-positive and Gram-negative bacteria. The protein is Defense protein 3 of Lonomia obliqua (Moth).